The sequence spans 335 residues: Succinylglutamate desuccinylase (335 aa).

The Zn(2+) site is built by H59, E62, and H151. Residue E215 is part of the active site.

Belongs to the AspA/AstE family. Succinylglutamate desuccinylase subfamily. The cofactor is Zn(2+).

The enzyme catalyses N-succinyl-L-glutamate + H2O = L-glutamate + succinate. Its pathway is amino-acid degradation; L-arginine degradation via AST pathway; L-glutamate and succinate from L-arginine: step 5/5. In terms of biological role, transforms N(2)-succinylglutamate into succinate and glutamate. The protein is Succinylglutamate desuccinylase of Pseudomonas putida (strain GB-1).